Here is a 396-residue protein sequence, read N- to C-terminus: Anticodon nuclease (396 aa).

In terms of biological role, anticodon endonuclease (ACNase) that triggers the cleavage ligation of tRNA(Lys). It is activated by T4 stp protein and masked by the prrD protein (the endonuclease subunit of EcoprrI). The prr locus restricts phage T4 mutants lacking polynucleotide kinase or RNA ligase; T4 mutants lacking these genes manifest a T4-induced anticodon nuclease (ACNase). It is thought that Stp and other T4-encoded ACNase factors counteract the masking agents, thus activating the latent ACNase. This is Anticodon nuclease from Escherichia coli.